Consider the following 553-residue polypeptide: RNA N(6)-adenosine-methyltransferase METTL16 (553 aa).

The segment at 17–20 (PPDF) is RNA-binding. S-adenosyl-L-methionine contacts are provided by arginine 82, glycine 110, serine 114, glutamate 133, threonine 164, and asparagine 184. Positions 163-167 (KTLLM) are K-loop. RNA-binding regions lie at residues 199 to 211 (SRNSRRPPPSSVN), 250 to 254 (GKKCS), and 277 to 283 (QGRTMRW). Positions 289–400 (FYDDVTVPSP…QLREVPRAPE (112 aa)) are VCR 1. Serine 329, serine 425, and serine 429 each carry phosphoserine. The tract at residues 457-496 (EETPEATEDERDEERGGMEAMESCKGSSNGAQDGEASEKG) is disordered. A compositionally biased stretch (acidic residues) spans 458–468 (ETPEATEDERD). Threonine 463 bears the Phosphothreonine mark. The interval 506–553 (YLFKCLVNIKKEAGDAVVEMHWVEGQNRDLMNQLCTYVRNQILRLVAS) is VCR 2.

Belongs to the methyltransferase superfamily. METTL16/RlmF family. In terms of assembly, interacts with MEPCE. Interacts with LARP7.

Its subcellular location is the nucleus. The protein resides in the cytoplasm. It carries out the reaction adenosine in U6 snRNA + S-adenosyl-L-methionine = N(6)-methyladenosine in U6 snRNA + S-adenosyl-L-homocysteine + H(+). The enzyme catalyses an adenosine in mRNA + S-adenosyl-L-methionine = an N(6)-methyladenosine in mRNA + S-adenosyl-L-homocysteine + H(+). Its activity is regulated as follows. Methyltransferase activity is autoinhibited by the K-loop region that blocks S-adenosyl-L-methionine-binding. Upon activation, K-loop changes conformation, allowing S-adenosyl-L-methionine-binding and subsequent methyltransferase activity. mRNA N6-adenosine-methyltransferase activity is inhibited by zinc. In terms of biological role, RNA N6-methyltransferase that methylates adenosine residues at the N(6) position of a subset of RNAs and is involved in S-adenosyl-L-methionine homeostasis by regulating expression of MAT2A transcripts. Able to N6-methylate a subset of mRNAs and U6 small nuclear RNAs (U6 snRNAs). In contrast to the METTL3-METTL14 heterodimer, only able to methylate a limited number of RNAs: requires both a 5'UACAGAGAA-3' nonamer sequence and a specific RNA structure. Plays a key role in S-adenosyl-L-methionine homeostasis by mediating N6-methylation of MAT2A mRNAs, altering splicing of MAT2A transcripts: in presence of S-adenosyl-L-methionine, binds the 3'-UTR region of MAT2A mRNA and specifically N6-methylates the first hairpin of MAT2A mRNA, preventing recognition of their 3'-splice site by U2AF1/U2AF35, thereby inhibiting splicing and protein production of S-adenosylmethionine synthase. In S-adenosyl-L-methionine-limiting conditions, binds the 3'-UTR region of MAT2A mRNA but stalls due to the lack of a methyl donor, preventing N6-methylation and promoting expression of MAT2A. In addition to mRNAs, also able to mediate N6-methylation of U6 small nuclear RNA (U6 snRNA): specifically N6-methylates adenine in position 43 of U6 snRNAs. Also able to bind various lncRNAs, such as 7SK snRNA (7SK RNA) or 7SL RNA. Specifically binds the 3'-end of the MALAT1 long non-coding RNA. This chain is RNA N(6)-adenosine-methyltransferase METTL16, found in Mus musculus (Mouse).